Reading from the N-terminus, the 385-residue chain is 8-amino-7-oxononanoate synthase (385 aa).

Residue Arg23 coordinates substrate. Pyridoxal 5'-phosphate is bound at residue 110 to 111; that stretch reads GF. His135 is a substrate binding site. Pyridoxal 5'-phosphate is bound by residues Ser180, His208, and Thr234. Lys237 carries the post-translational modification N6-(pyridoxal phosphate)lysine. Residue Thr350 coordinates substrate.

Belongs to the class-II pyridoxal-phosphate-dependent aminotransferase family. BioF subfamily. As to quaternary structure, homodimer. Pyridoxal 5'-phosphate is required as a cofactor.

The enzyme catalyses 6-carboxyhexanoyl-[ACP] + L-alanine + H(+) = (8S)-8-amino-7-oxononanoate + holo-[ACP] + CO2. Its pathway is cofactor biosynthesis; biotin biosynthesis. Its function is as follows. Catalyzes the decarboxylative condensation of pimeloyl-[acyl-carrier protein] and L-alanine to produce 8-amino-7-oxononanoate (AON), [acyl-carrier protein], and carbon dioxide. In Vibrio vulnificus (strain CMCP6), this protein is 8-amino-7-oxononanoate synthase.